The sequence spans 57 residues: UPF0391 membrane protein AZOSEA39630 (57 aa).

Transmembrane regions (helical) follow at residues 4-24 and 37-57; these read WAIIFFVISVIAGLLGFTGVA and IALAIFLIVLVFGVLLGVLVF.

It belongs to the UPF0391 family.

The protein resides in the cell membrane. The sequence is that of UPF0391 membrane protein AZOSEA39630 from Aromatoleum aromaticum (strain DSM 19018 / LMG 30748 / EbN1) (Azoarcus sp. (strain EbN1)).